The primary structure comprises 406 residues: Transcriptional activator NprA (406 aa).

TPR repeat units lie at residues Y125–Q158, A206–I239, G246–S279, and F285–E318.

Functionally, activates the transcription of nprS by about five fold. May bind to the upstream region of nprS promoter. In Geobacillus stearothermophilus (Bacillus stearothermophilus), this protein is Transcriptional activator NprA (nprA).